A 199-amino-acid polypeptide reads, in one-letter code: Dephospho-CoA kinase (199 aa).

Residues 2–199 (KIAVTGGYSS…FVADRIEKKK (198 aa)) enclose the DPCK domain. 10-15 (SSGKSS) provides a ligand contact to ATP.

This sequence belongs to the CoaE family.

The protein localises to the cytoplasm. The catalysed reaction is 3'-dephospho-CoA + ATP = ADP + CoA + H(+). It functions in the pathway cofactor biosynthesis; coenzyme A biosynthesis; CoA from (R)-pantothenate: step 5/5. Its function is as follows. Catalyzes the phosphorylation of the 3'-hydroxyl group of dephosphocoenzyme A to form coenzyme A. In Desulfotalea psychrophila (strain LSv54 / DSM 12343), this protein is Dephospho-CoA kinase.